The sequence spans 707 residues: NADP(+)-dependent formate dehydrogenase subunit beta (707 aa).

In terms of assembly, heterotetramer composed of two alpha (FdhA) and two beta (FdhB) subunits.

Its subcellular location is the cytoplasm. The catalysed reaction is formate + NADP(+) = CO2 + NADPH. Its activity is regulated as follows. Activity is very sensitive to oxygen. The activity in growing cells is enhanced when selenite and molybdate are added together to the growth medium. Tungstate replaces and is better than molybdate. Selenite is incorporated into the enzyme. Requires a sulfhydryl compound for activity. Inhibited by cyanide, EDTA, hypophosphite and mercaptoethanol. Sulfite inhibits the activity with NADP but not with methyl viologen as electron acceptor. Functionally, component of a dehydrogenase that catalyzes the NADP-dependent reduction of CO(2) to formate, the first step in the synthesis of the methyl group of acetate during synthesis of acetate from CO(2). In vitro, can use methyl viologen and benzyl viologen in addition to its natural electron acceptor. This is NADP(+)-dependent formate dehydrogenase subunit beta from Moorella thermoacetica (Clostridium thermoaceticum).